The sequence spans 244 residues: LexA repressor (244 aa).

The segment at 1–24 (MSDSSDTTVDGASDGASDGASGAD) is disordered. Positions 10 to 24 (DGASDGASDGASGAD) are enriched in low complexity. The segment at residues 58-78 (IREIGDAVGLTSTSSVAHQLR) is a DNA-binding region (H-T-H motif). Active-site for autocatalytic cleavage activity residues include Ser168 and Lys205.

It belongs to the peptidase S24 family. In terms of assembly, homodimer.

It catalyses the reaction Hydrolysis of Ala-|-Gly bond in repressor LexA.. Functionally, represses a number of genes involved in the response to DNA damage (SOS response), including recA and lexA. In the presence of single-stranded DNA, RecA interacts with LexA causing an autocatalytic cleavage which disrupts the DNA-binding part of LexA, leading to derepression of the SOS regulon and eventually DNA repair. The sequence is that of LexA repressor from Mycobacterium marinum (strain ATCC BAA-535 / M).